Reading from the N-terminus, the 155-residue chain is 6,7-dimethyl-8-ribityllumazine synthase (155 aa).

Residues phenylalanine 24, 58–60 (AFE), and 82–84 (VII) contribute to the 5-amino-6-(D-ribitylamino)uracil site. 87–88 (ST) is a binding site for (2S)-2-hydroxy-3-oxobutyl phosphate. The active-site Proton donor is histidine 90. Position 115 (phenylalanine 115) interacts with 5-amino-6-(D-ribitylamino)uracil. Residue arginine 129 coordinates (2S)-2-hydroxy-3-oxobutyl phosphate.

It belongs to the DMRL synthase family.

It catalyses the reaction (2S)-2-hydroxy-3-oxobutyl phosphate + 5-amino-6-(D-ribitylamino)uracil = 6,7-dimethyl-8-(1-D-ribityl)lumazine + phosphate + 2 H2O + H(+). It participates in cofactor biosynthesis; riboflavin biosynthesis; riboflavin from 2-hydroxy-3-oxobutyl phosphate and 5-amino-6-(D-ribitylamino)uracil: step 1/2. Functionally, catalyzes the formation of 6,7-dimethyl-8-ribityllumazine by condensation of 5-amino-6-(D-ribitylamino)uracil with 3,4-dihydroxy-2-butanone 4-phosphate. This is the penultimate step in the biosynthesis of riboflavin. In Pelodictyon phaeoclathratiforme (strain DSM 5477 / BU-1), this protein is 6,7-dimethyl-8-ribityllumazine synthase.